Reading from the N-terminus, the 256-residue chain is Thrombin-like enzyme cerastocytin (256 aa).

Residues 1–18 (MVLISVLASLLVLQLSYA) form the signal peptide. Positions 19–24 (QKSSEL) are excised as a propeptide. A Peptidase S1 domain is found at 25 to 247 (VIGGAECNIN…YTDWIRNIIA (223 aa)). Intrachain disulfides connect Cys31/Cys161, Cys98/Cys254, Cys140/Cys208, Cys172/Cys187, and Cys198/Cys223. N-linked (GlcNAc...) asparagine glycosylation is present at Asn44. Active-site charge relay system residues include His65 and Asp108. Asn119, Asn120, and Asn152 each carry an N-linked (GlcNAc...) asparagine glycan. Ser202 serves as the catalytic Charge relay system.

The protein belongs to the peptidase S1 family. Snake venom subfamily. As to quaternary structure, monomer. Expressed by the venom gland.

The protein resides in the secreted. With respect to regulation, its platelets aggregating activity is inhibited by chlorpromazine, theophylline mepacrine. Its platelet aggregating activity and its amidolytic activity are inhibited by PMSF, TPCK, TLCK and soybean trypsin inhibitors. Is unaffected by hirudin or by antithrombin-III in the presence of heparin. In terms of biological role, thrombin-like snake venom serine protease which potently induces platelet aggregation and has fibrinogenolytic activities. Clots purified fibrinogen and hydrolyzes alpha-chains (FGA). High concentrations of this enzyme also cleave prothrombin (F2) and factor X (F10). Is also able to activate factor XIII (F8). The sequence is that of Thrombin-like enzyme cerastocytin from Cerastes cerastes (Horned desert viper).